The primary structure comprises 309 residues: Methionyl-tRNA formyltransferase (309 aa).

107–110 is a binding site for (6S)-5,6,7,8-tetrahydrofolate; that stretch reads SLLP.

This sequence belongs to the Fmt family.

It catalyses the reaction L-methionyl-tRNA(fMet) + (6R)-10-formyltetrahydrofolate = N-formyl-L-methionyl-tRNA(fMet) + (6S)-5,6,7,8-tetrahydrofolate + H(+). Functionally, attaches a formyl group to the free amino group of methionyl-tRNA(fMet). The formyl group appears to play a dual role in the initiator identity of N-formylmethionyl-tRNA by promoting its recognition by IF2 and preventing the misappropriation of this tRNA by the elongation apparatus. The chain is Methionyl-tRNA formyltransferase from Borrelia hermsii (strain HS1 / DAH).